Consider the following 462-residue polypeptide: Integrator complex subunit 12 (462 aa).

The disordered stretch occupies residues 42–132 (GIDSSYRPSQ…PETQSSPITV (91 aa)). The span at 59–86 (ISSTKNISIKQEPKISSSLPSGNNNGKV) shows a compositional bias: polar residues. Lysine 68 participates in a covalent cross-link: Glycyl lysine isopeptide (Lys-Gly) (interchain with G-Cter in SUMO2). Basic and acidic residues predominate over residues 88–124 (TTEKVKKEAEKRPADKMKSDITEGVDIPKKPRLEKPE). At serine 128 the chain carries Phosphoserine. Residues 159 to 215 (GLACVVCRQMMVASGNQLVECQECHNLYHRDCHKPQVTDKEANDPRLVWYCARCTRQ) form a PHD-type zinc finger. A Glycyl lysine isopeptide (Lys-Gly) (interchain with G-Cter in SUMO2) cross-link involves residue lysine 254. The span at 301–328 (SSAGPSTAKLSSTTQNNTGKPATSSANQ) shows a compositional bias: polar residues. Residues 301-462 (SSAGPSTAKL…KKAAQKKLKK (162 aa)) are disordered. 2 stretches are compositionally biased toward low complexity: residues 347–358 (KIGSNNSTTPTV) and 382–437 (VSKV…GPTS). A compositionally biased stretch (basic residues) spans 449-462 (QMVKKKAAQKKLKK).

This sequence belongs to the Integrator subunit 12 family. As to quaternary structure, component of the Integrator complex, composed of core subunits INTS1, INTS2, INTS3, INTS4, INTS5, INTS6, INTS7, INTS8, INTS9/RC74, INTS10, INTS11/CPSF3L, INTS12, INTS13, INTS14 and INTS15. The core complex associates with protein phosphatase 2A subunits PPP2CA and PPP2R1A, to form the Integrator-PP2A (INTAC) complex. Dephosphorylated at Ser-128 by the PNUTS-PP1 complex, promoting RNA polymerase II transcription pause-release.

The protein localises to the nucleus. In terms of biological role, component of the integrator complex, a multiprotein complex that terminates RNA polymerase II (Pol II) transcription in the promoter-proximal region of genes. The integrator complex provides a quality checkpoint during transcription elongation by driving premature transcription termination of transcripts that are unfavorably configured for transcriptional elongation: the complex terminates transcription by (1) catalyzing dephosphorylation of the C-terminal domain (CTD) of Pol II subunit POLR2A/RPB1 and SUPT5H/SPT5, (2) degrading the exiting nascent RNA transcript via endonuclease activity and (3) promoting the release of Pol II from bound DNA. The integrator complex is also involved in terminating the synthesis of non-coding Pol II transcripts, such as enhancer RNAs (eRNAs), small nuclear RNAs (snRNAs), telomerase RNAs and long non-coding RNAs (lncRNAs). Mediates recruitment of cytoplasmic dynein to the nuclear envelope, probably as component of the integrator complex. The chain is Integrator complex subunit 12 from Homo sapiens (Human).